Consider the following 1888-residue polypeptide: MAMKPEVEQELAHVLLTELLAYQFASPVRWIETQDVFLKDFNTERVVEIGPSPTLAGMAQRTIKNKYESYDAALSLQRQVLCYSKDAKEIYYTPDPADLAPVEEPNAEEQTGAAATPAAAAAPAAAAAAPAAPAARPVAELPDEAVKASLLLHVLVAQKLKKSLEQVPMSKTIKDLVGGKSTVQNEILGDLGKEFGSTPEKPEETPLEELAETFQDTFAGSLGKQSSSLISRLMSSKMPGGFTITVARKYLQTRWGLGSGRQDSVLLIALTNEPASRLGGEADAKSFLDSMAQKYASISGVDLSSASAGASAGAGAGGAGGATIDAAAFEELTKDQKVMARQQLEVLARYLKMDLNGGEKKFLQEKNTVAELQSQLDYLNNELGEYFIQGISTSFSRKKARVFDSSWNWAKQALLTLYFQIIHGVLKNVDREVVTEAINIMNRSNETLIKFMEYHISHCDENNGENYKLAKTLGHQLIENCKQVLDMDPVYKDISKPTGPKTNIDKNGNIKYSEEPRAAVRKLSQYVQEMALGGPLTKESQPTIQEDLTRVYKAINAQAAEHNISDSTKLEFEKLYGELLKFLETSNEIDASATTRLAGVVDDDLDKDSTKEVASLPNKSEISKNVSSIIPRETVPFLHLKKKLPSCEWAYDRQLSTLFLDGLEKAAINGVTFKDKYVLITGAGAGSIGAEVLQGLVQGGAKVIVTTSRFSKKVTDYYQSIYAQYGAKGSTLVVVPFNQGSKQDVEALIDFIYDDEKNGGLGWDLDAVIPFAAIPENGIELDKIDSKSEFAHRIMLTNILRMLGSVKKQKSARGIETRPAQVILPLSPNHGTFGGDGMYSESKLSLETLFNRWHSESWSNQLTICGAIIGWTRGTGLMNANNIIAEGIEKMGVRTFSQKEMAFNLLGLLIPEVVNLCQRSPVMADLNGGLQFLTDLKEFTGKLRGELTETSEIRKAVSIETALEHKTVAGANADAAFAQVEVQPRANIQLEFPTLKPYETVKKIGSPDLEGLLDLEKVIVVTGFSEVGPWGSSRTRGEMEAFGEFSLEGCVEMSWIMGLIKYHNGNLKGRPYTGWVDSKTNEPVDDKDIKAKDESHVLEHSGIRLIEPELFNSYNPEKKQMIQEVVIEEDLEPFEASKETAEQFKHEHGDKVDIFEIPETGEFSVRLLKGATLYIPKALRFDRLVAGQIPTGWNAKTYGISDDTISQVDPITLFVLVSVIEAFIASGITDPYEMYKYVHVSEVGNCSGSGMGGVSALRGMFKDRYKDQPVQNDILQESFINTMSAWVNMLLISSSGPIKTPVGACATAVESLDIGVETILSGKAKICIVGGYDDFQEEGSYEFGNMNATSNSLDEFDHGRTPAEMSRPATTTRNGFMEAQGAGIQVIMNADLALKMGVPIYGILALTATATDKIGRSVPAPGKGILTTAREHHGNLKFPTPLLDIKYRKRQLKNREAQIKQWVETELEMLKYEAEGIPAEDQETFYAERTEEIKREATRQLKSAQAQWGSEFYKNDPRIAPLRGALATYGLTIDDLGVASFHGTSTKANDKNESATINEMMKHLGRSEGNPVLGVFQKYLTGHPKGAAGAWMMNGALQILNSGIVPGNRNADNVDKLLQQFEYILYPSRSLKTDGIKAVSVTSFGFGQKGAQAVAVHPDFLYAAVDEATYNAYVAKVTAREKAAYKYFHNGMIHNTLFVSKEHAPYSDELEQPVYLDPLARVSSDKKTGALVFNGKGIQSSSQFVSEENRKTATIVSELAKKTAGTDASGVGVDVELIKSINVENDTFIERNFTEAEIAYCKKQPSVQSSFAGTWSAKEAVFKSLGVKSQGGGASLKDIEITREAGKGPEVVLHGAAKEAATKANVKNVKVSISHDDFQSVAVAVSEK.

A disordered region spans residues 98 to 118 (DLAPVEEPNAEEQTGAAATPA). The Carrier domain maps to 146–221 (VKASLLLHVL…ETFQDTFAGS (76 aa)). At Ser181 the chain carries O-(pantetheine 4'-phosphoryl)serine. Residues 675-874 (DKYVLITGAG…CGAIIGWTRG (200 aa)) are beta-ketoacyl reductase. Positions 1119–1657 (KQMIQEVVIE…QKGAQAVAVH (539 aa)) constitute a Ketosynthase family 3 (KS3) domain. Residues Cys1305, His1542, and His1583 each act as for beta-ketoacyl synthase activity in the active site. Residues Asp1774, Val1775, and Glu1776 each coordinate Mg(2+). Residues 1774 to 1776 (DVE), Tyr1800, Ser1810, 1819 to 1829 (EAVFKSLGVKS), 1843 to 1846 (REAG), and 1873 to 1875 (ISH) contribute to the acetyl-CoA site. Positions 1874 and 1875 each coordinate Mg(2+).

It belongs to the thiolase-like superfamily. Fungal fatty acid synthetase subunit alpha family. In terms of assembly, fatty acid synthase is composed of alpha and beta subunits.

It catalyses the reaction acetyl-CoA + n malonyl-CoA + 2n NADPH + 4n H(+) = a long-chain-acyl-CoA + n CoA + n CO2 + 2n NADP(+).. The catalysed reaction is a fatty acyl-[ACP] + malonyl-[ACP] + H(+) = a 3-oxoacyl-[ACP] + holo-[ACP] + CO2. The enzyme catalyses a (3R)-hydroxyacyl-[ACP] + NADP(+) = a 3-oxoacyl-[ACP] + NADPH + H(+). Functionally, fatty acid synthetase catalyzes the formation of long-chain fatty acids from acetyl-CoA, malonyl-CoA and NADPH. The alpha subunit contains domains for: acyl carrier protein, 3-oxoacyl-[acyl-carrier-protein] reductase, and 3-oxoacyl-[acyl-carrier-protein] synthase. In this species, higher amounts of C18 than C16 fatty acids are produced. In Lachancea kluyveri (Yeast), this protein is Fatty acid synthase subunit alpha (FAS2).